We begin with the raw amino-acid sequence, 352 residues long: 4-hydroxybenzaldehyde synthase, chloroplastic (352 aa).

An N-linked (GlcNAc...) asparagine glycan is attached at asparagine 122. Cystine bridges form between cysteine 159–cysteine 199 and cysteine 190–cysteine 231. Asparagine 247 is a glycosylation site (N-linked (GlcNAc...) asparagine). The cysteines at positions 289 and 339 are disulfide-linked. Catalysis depends on residues histidine 298 and asparagine 318.

Belongs to the peptidase C1 family. Forms homodimers, homotrimers and homotetramers. As to expression, mainly expressed in pods, but also present in stems, roots, leaves and embryos (at protein level).

It is found in the plastid. Its subcellular location is the chloroplast. It carries out the reaction (E)-4-coumarate + H2O = 4-hydroxybenzaldehyde + acetate. Its pathway is aromatic compound metabolism; phenylpropanoid biosynthesis. With respect to regulation, inhibited by ascorbate. In terms of biological role, involved in the biosynthesis of vanillin (4-hydroxy-3-methoxy-benzaldehyde) and derivative natural products, key components of vanilla pods flavor. Catalyzes the conversion of (E)-4-coumarate to 4-hydroxybenzaldehyde, a vanillin precursor. Mediates the conversion of ferulic acid to 3-methoxy-4-hydroxybenzaldehyde with a very low efficiency. Cannot use cinnamic, caffeic, sinapic and o-coumaric acids as substrates. The chain is 4-hydroxybenzaldehyde synthase, chloroplastic from Vanilla planifolia (Vanilla).